The following is an 88-amino-acid chain: Small ribosomal subunit protein uS15c (88 aa).

It belongs to the universal ribosomal protein uS15 family. In terms of assembly, part of the 30S ribosomal subunit.

The protein resides in the plastid. It is found in the chloroplast. The protein is Small ribosomal subunit protein uS15c (rps15) of Barbarea verna (Land cress).